The primary structure comprises 263 residues: Acetylglutamate kinase (263 aa).

Substrate-binding positions include Gly49 to Gly50, Arg71, and Asn163.

This sequence belongs to the acetylglutamate kinase family. ArgB subfamily.

The protein localises to the cytoplasm. It catalyses the reaction N-acetyl-L-glutamate + ATP = N-acetyl-L-glutamyl 5-phosphate + ADP. It participates in amino-acid biosynthesis; L-arginine biosynthesis; N(2)-acetyl-L-ornithine from L-glutamate: step 2/4. In terms of biological role, catalyzes the ATP-dependent phosphorylation of N-acetyl-L-glutamate. The chain is Acetylglutamate kinase from Moritella abyssi.